Reading from the N-terminus, the 274-residue chain is Thiazole synthase (274 aa).

Residue K115 is the Schiff-base intermediate with DXP of the active site. Residues G176, 202 to 203 (AG), and 224 to 225 (NS) contribute to the 1-deoxy-D-xylulose 5-phosphate site.

This sequence belongs to the ThiG family. In terms of assembly, homotetramer. Forms heterodimers with either ThiH or ThiS.

The protein resides in the cytoplasm. The enzyme catalyses [ThiS sulfur-carrier protein]-C-terminal-Gly-aminoethanethioate + 2-iminoacetate + 1-deoxy-D-xylulose 5-phosphate = [ThiS sulfur-carrier protein]-C-terminal Gly-Gly + 2-[(2R,5Z)-2-carboxy-4-methylthiazol-5(2H)-ylidene]ethyl phosphate + 2 H2O + H(+). Its pathway is cofactor biosynthesis; thiamine diphosphate biosynthesis. In terms of biological role, catalyzes the rearrangement of 1-deoxy-D-xylulose 5-phosphate (DXP) to produce the thiazole phosphate moiety of thiamine. Sulfur is provided by the thiocarboxylate moiety of the carrier protein ThiS. In vitro, sulfur can be provided by H(2)S. This Parasynechococcus marenigrum (strain WH8102) protein is Thiazole synthase.